We begin with the raw amino-acid sequence, 344 residues long: Arginine N-succinyltransferase (344 aa).

Leu-125 contacts succinyl-CoA. Catalysis depends on His-229, which acts as the Proton donor.

The protein belongs to the arginine N-succinyltransferase family.

It carries out the reaction succinyl-CoA + L-arginine = N(2)-succinyl-L-arginine + CoA + H(+). Its pathway is amino-acid degradation; L-arginine degradation via AST pathway; L-glutamate and succinate from L-arginine: step 1/5. In terms of biological role, catalyzes the transfer of succinyl-CoA to arginine to produce N(2)-succinylarginine. The polypeptide is Arginine N-succinyltransferase (Shigella dysenteriae serotype 1 (strain Sd197)).